We begin with the raw amino-acid sequence, 329 residues long: DNA-directed RNA polymerase subunit alpha (329 aa).

The alpha N-terminal domain (alpha-NTD) stretch occupies residues 1-235 (MQGSVTEFLK…EQLDAFVDLR (235 aa)). Residues 249–329 (FDPILLRPVD…NWPPASIAED (81 aa)) are alpha C-terminal domain (alpha-CTD).

It belongs to the RNA polymerase alpha chain family. In terms of assembly, homodimer. The RNAP catalytic core consists of 2 alpha, 1 beta, 1 beta' and 1 omega subunit. When a sigma factor is associated with the core the holoenzyme is formed, which can initiate transcription.

The enzyme catalyses RNA(n) + a ribonucleoside 5'-triphosphate = RNA(n+1) + diphosphate. In terms of biological role, DNA-dependent RNA polymerase catalyzes the transcription of DNA into RNA using the four ribonucleoside triphosphates as substrates. The sequence is that of DNA-directed RNA polymerase subunit alpha from Mannheimia succiniciproducens (strain KCTC 0769BP / MBEL55E).